Consider the following 349-residue polypeptide: S-adenosylmethionine:tRNA ribosyltransferase-isomerase (349 aa).

Belongs to the QueA family. As to quaternary structure, monomer.

It is found in the cytoplasm. It catalyses the reaction 7-aminomethyl-7-carbaguanosine(34) in tRNA + S-adenosyl-L-methionine = epoxyqueuosine(34) in tRNA + adenine + L-methionine + 2 H(+). The protein operates within tRNA modification; tRNA-queuosine biosynthesis. Transfers and isomerizes the ribose moiety from AdoMet to the 7-aminomethyl group of 7-deazaguanine (preQ1-tRNA) to give epoxyqueuosine (oQ-tRNA). The polypeptide is S-adenosylmethionine:tRNA ribosyltransferase-isomerase (Flavobacterium psychrophilum (strain ATCC 49511 / DSM 21280 / CIP 103535 / JIP02/86)).